A 316-amino-acid chain; its full sequence is Aspartate carbamoyltransferase catalytic subunit (316 aa).

R58 and T59 together coordinate carbamoyl phosphate. Residue K86 participates in L-aspartate binding. Carbamoyl phosphate is bound by residues R108, H136, and Q139. The L-aspartate site is built by R169 and R223. The carbamoyl phosphate site is built by G265 and P266.

It belongs to the aspartate/ornithine carbamoyltransferase superfamily. ATCase family. In terms of assembly, heterododecamer (2C3:3R2) of six catalytic PyrB chains organized as two trimers (C3), and six regulatory PyrI chains organized as three dimers (R2).

The enzyme catalyses carbamoyl phosphate + L-aspartate = N-carbamoyl-L-aspartate + phosphate + H(+). It participates in pyrimidine metabolism; UMP biosynthesis via de novo pathway; (S)-dihydroorotate from bicarbonate: step 2/3. Its function is as follows. Catalyzes the condensation of carbamoyl phosphate and aspartate to form carbamoyl aspartate and inorganic phosphate, the committed step in the de novo pyrimidine nucleotide biosynthesis pathway. This is Aspartate carbamoyltransferase catalytic subunit from Anaeromyxobacter sp. (strain Fw109-5).